The sequence spans 338 residues: Ornithine carbamoyltransferase, catabolic (338 aa).

Carbamoyl phosphate is bound by residues 58–61 (STRT), Q85, R109, and 136–139 (HPTQ). L-ornithine-binding positions include N168, D232, and 236 to 237 (SM). Carbamoyl phosphate is bound by residues 273–274 (CL) and R318.

It belongs to the aspartate/ornithine carbamoyltransferase superfamily. OTCase family.

It localises to the cytoplasm. It catalyses the reaction carbamoyl phosphate + L-ornithine = L-citrulline + phosphate + H(+). It functions in the pathway amino-acid degradation; L-arginine degradation via ADI pathway; carbamoyl phosphate from L-arginine: step 2/2. Functionally, reversibly catalyzes the transfer of the carbamoyl group from carbamoyl phosphate (CP) to the N(epsilon) atom of ornithine (ORN) to produce L-citrulline. The protein is Ornithine carbamoyltransferase, catabolic of Streptococcus pneumoniae serotype 4 (strain ATCC BAA-334 / TIGR4).